A 199-amino-acid chain; its full sequence is MLLDLSEEHKEHLAFLPQVDTAVVAEFGRIAVEFLRRGSNPKIYEGAARKLNVSSDTIQHGVEGLTYLLTESSKLMISELDFQDSVFVLGFSEELNKLLLQLYLDNRKEIRTILNELAPRLPSYHSLEWRLDVQLASRSLRQQIKPAVTIKLHLDQNGDHSTHFLQTDPATLLHLVQQLEQALEEMKTNHCRRVVRSIK.

The 68-residue stretch at 123–190 (SYHSLEWRLD…QALEEMKTNH (68 aa)) folds into the COMM domain.

It belongs to the COMM domain-containing protein 2 family. As to quaternary structure, component of the commander complex consisting of the CCC subcomplex and the retriever subcomplex. Component of the CCC (COMMD/CCDC22/CCDC93) subcomplex consisting of COMMD1, COMMD2, COMMD3, COMMD4, COMMD5, COMMD6, COMMD7, COMMD8, COMMD9, COMMD10, CCDC22 and CCDC93; within the complex forms a heterodimer with COMMD3. Interacts with RELA, RELB, NFKB1/p105, NFKB2/p100. Interacts with CCDC22, CCDC93, SCNN1B, CUL3, CUL4B, CUL5, CUL7.

It is found in the cytoplasm. In terms of biological role, scaffold protein in the commander complex that is essential for endosomal recycling of transmembrane cargos; the commander complex is composed of the CCC subcomplex and the retriever subcomplex. May modulate activity of cullin-RING E3 ubiquitin ligase (CRL) complexes. May down-regulate activation of NF-kappa-B. The sequence is that of COMM domain-containing protein 2 (Commd2) from Mus musculus (Mouse).